Consider the following 356-residue polypeptide: Phosphate acyltransferase (356 aa).

The protein belongs to the PlsX family. Homodimer. Probably interacts with PlsY.

Its subcellular location is the cytoplasm. The enzyme catalyses a fatty acyl-[ACP] + phosphate = an acyl phosphate + holo-[ACP]. The protein operates within lipid metabolism; phospholipid metabolism. Catalyzes the reversible formation of acyl-phosphate (acyl-PO(4)) from acyl-[acyl-carrier-protein] (acyl-ACP). This enzyme utilizes acyl-ACP as fatty acyl donor, but not acyl-CoA. The polypeptide is Phosphate acyltransferase (Bartonella henselae (strain ATCC 49882 / DSM 28221 / CCUG 30454 / Houston 1) (Rochalimaea henselae)).